The chain runs to 252 residues: Phosphate import ATP-binding protein PstB (252 aa).

The region spanning 6–247 (IDTRDVNFWY…PEKEATQNYI (242 aa)) is the ABC transporter domain. 38–45 (GPSGCGKS) contacts ATP.

It belongs to the ABC transporter superfamily. Phosphate importer (TC 3.A.1.7) family. The complex is composed of two ATP-binding proteins (PstB), two transmembrane proteins (PstC and PstA) and a solute-binding protein (PstS).

It is found in the cell inner membrane. The enzyme catalyses phosphate(out) + ATP + H2O = ADP + 2 phosphate(in) + H(+). Functionally, part of the ABC transporter complex PstSACB involved in phosphate import. Responsible for energy coupling to the transport system. This chain is Phosphate import ATP-binding protein PstB, found in Bacteroides thetaiotaomicron (strain ATCC 29148 / DSM 2079 / JCM 5827 / CCUG 10774 / NCTC 10582 / VPI-5482 / E50).